A 152-amino-acid polypeptide reads, in one-letter code: Lipoprotein signal peptidase (152 aa).

Transmembrane regions (helical) follow at residues 55-75 (NKMWFFYIITVVFVVFIVFYM) and 85-105 (LGISLGLILGGAIGNFIDRVF). Active-site residues include Asp111 and Asp129. Residues 124-144 (VFNIADSALCIGVVLIIIQTL) traverse the membrane as a helical segment.

This sequence belongs to the peptidase A8 family.

Its subcellular location is the cell membrane. The enzyme catalyses Release of signal peptides from bacterial membrane prolipoproteins. Hydrolyzes -Xaa-Yaa-Zaa-|-(S,diacylglyceryl)Cys-, in which Xaa is hydrophobic (preferably Leu), and Yaa (Ala or Ser) and Zaa (Gly or Ala) have small, neutral side chains.. It functions in the pathway protein modification; lipoprotein biosynthesis (signal peptide cleavage). Its function is as follows. This protein specifically catalyzes the removal of signal peptides from prolipoproteins. This is Lipoprotein signal peptidase from Bacillus cereus (strain ZK / E33L).